An 89-amino-acid chain; its full sequence is Small ribosomal subunit protein uS15 (89 aa).

The segment covering 1-21 has biased composition (basic and acidic residues); that stretch reads MALSKEQKTETLKEFGLHETD. Residues 1–22 are disordered; sequence MALSKEQKTETLKEFGLHETDT.

The protein belongs to the universal ribosomal protein uS15 family. In terms of assembly, part of the 30S ribosomal subunit. Forms a bridge to the 50S subunit in the 70S ribosome, contacting the 23S rRNA.

One of the primary rRNA binding proteins, it binds directly to 16S rRNA where it helps nucleate assembly of the platform of the 30S subunit by binding and bridging several RNA helices of the 16S rRNA. Functionally, forms an intersubunit bridge (bridge B4) with the 23S rRNA of the 50S subunit in the ribosome. In Corynebacterium jeikeium (strain K411), this protein is Small ribosomal subunit protein uS15.